Reading from the N-terminus, the 309-residue chain is Low-density lipoprotein receptor-related protein 1 (309 aa).

Belongs to the LDLR family.

The protein localises to the endoplasmic reticulum. It is found in the golgi apparatus. Its subcellular location is the endosome. Its function is as follows. Involved in endocytosis, fatty acid beta-oxidation and infectious growth. Plays a critical role in the accumulation of MSN2 from the cytosol to the nucleus by activating the cyclic AMP signaling pathway. MSN2 can then target the dienoyl-coenzyme A isomerase DCI1 and other genes involved in fatty acid beta-oxidation, which is important for lipid droplets degradation and infectious growth. The polypeptide is Low-density lipoprotein receptor-related protein 1 (Pyricularia oryzae (strain 70-15 / ATCC MYA-4617 / FGSC 8958) (Rice blast fungus)).